The chain runs to 218 residues: Large ribosomal subunit protein bL25 (218 aa).

The tract at residues 187–218 (SATAAVEEAKEDGAPEESAQGQGAAEAQETGK) is disordered. Low complexity predominate over residues 202–218 (EESAQGQGAAEAQETGK).

This sequence belongs to the bacterial ribosomal protein bL25 family. CTC subfamily. Part of the 50S ribosomal subunit; part of the 5S rRNA/L5/L18/L25 subcomplex. Contacts the 5S rRNA. Binds to the 5S rRNA independently of L5 and L18.

This is one of the proteins that binds to the 5S RNA in the ribosome where it forms part of the central protuberance. This chain is Large ribosomal subunit protein bL25, found in Anaplasma marginale (strain Florida).